The following is a 249-amino-acid chain: DNA repair protein RecO (249 aa).

The protein belongs to the RecO family.

In terms of biological role, involved in DNA repair and RecF pathway recombination. This is DNA repair protein RecO from Exiguobacterium sp. (strain ATCC BAA-1283 / AT1b).